A 280-amino-acid polypeptide reads, in one-letter code: Probable holocytochrome-c-type synthase (280 aa).

The segment at 1–95 (MGSSQSTPKV…FALPTKREKS (95 aa)) is disordered. 2 HRM repeats span residues 35–40 (QCPLTP) and 56–61 (ACPVGA).

The protein belongs to the cytochrome c-type heme lyase family.

The protein resides in the mitochondrion inner membrane. It catalyses the reaction holo-[cytochrome c] = apo-[cytochrome c] + heme b. Probable lyase that catalyzes the covalent linking of the heme group to the cytochrome C apoprotein to produce the mature functional cytochrome. This chain is Probable holocytochrome-c-type synthase (cchl-1), found in Caenorhabditis elegans.